The primary structure comprises 671 residues: DNA ligase (671 aa).

NAD(+) contacts are provided by residues 34–38 (DSEYD), 83–84 (SL), and glutamate 113. Lysine 115 (N6-AMP-lysine intermediate) is an active-site residue. Arginine 136, glutamate 170, lysine 286, and lysine 310 together coordinate NAD(+). Cysteine 404, cysteine 407, cysteine 422, and cysteine 427 together coordinate Zn(2+). The 82-residue stretch at 590-671 (EEAGVFAGKT…FTQAVEQSEQ (82 aa)) folds into the BRCT domain.

This sequence belongs to the NAD-dependent DNA ligase family. LigA subfamily. Mg(2+) is required as a cofactor. It depends on Mn(2+) as a cofactor.

The catalysed reaction is NAD(+) + (deoxyribonucleotide)n-3'-hydroxyl + 5'-phospho-(deoxyribonucleotide)m = (deoxyribonucleotide)n+m + AMP + beta-nicotinamide D-nucleotide.. DNA ligase that catalyzes the formation of phosphodiester linkages between 5'-phosphoryl and 3'-hydroxyl groups in double-stranded DNA using NAD as a coenzyme and as the energy source for the reaction. It is essential for DNA replication and repair of damaged DNA. The chain is DNA ligase from Shouchella clausii (strain KSM-K16) (Alkalihalobacillus clausii).